The primary structure comprises 428 residues: D-amino acid dehydrogenase (428 aa).

Position 3–17 (3–17 (VVILGSGVVGVASAY)) interacts with FAD.

It belongs to the DadA oxidoreductase family. Requires FAD as cofactor.

The catalysed reaction is a D-alpha-amino acid + A + H2O = a 2-oxocarboxylate + AH2 + NH4(+). It participates in amino-acid degradation; D-alanine degradation; NH(3) and pyruvate from D-alanine: step 1/1. Functionally, oxidative deamination of D-amino acids. The polypeptide is D-amino acid dehydrogenase (Burkholderia cenocepacia (strain ATCC BAA-245 / DSM 16553 / LMG 16656 / NCTC 13227 / J2315 / CF5610) (Burkholderia cepacia (strain J2315))).